The primary structure comprises 156 residues: Ribonuclease H (156 aa).

One can recognise an RNase H type-1 domain in the interval Glu3–Glu144. Positions 12, 50, 72, and 136 each coordinate Mg(2+).

This sequence belongs to the RNase H family. Monomer. Mg(2+) serves as cofactor.

The protein localises to the cytoplasm. The catalysed reaction is Endonucleolytic cleavage to 5'-phosphomonoester.. Its function is as follows. Endonuclease that specifically degrades the RNA of RNA-DNA hybrids. The protein is Ribonuclease H of Shewanella amazonensis (strain ATCC BAA-1098 / SB2B).